The primary structure comprises 190 residues: Cytoglobin (190 aa).

The disordered stretch occupies residues 1–21; the sequence is MEKVPGDMEIERRERSEELSE. The 150-residue stretch at 18-167 folds into the Globin domain; the sequence is ELSEAERKAV…IYSHVTAAYK (150 aa). A disulfide bridge connects residues Cys-38 and Cys-83. His-81 and His-113 together coordinate heme b.

The protein belongs to the globin family. As to quaternary structure, monomeric. Homodimer; disulfide-linked in vitro. Also homooligomeric in vitro. Post-translationally, the formation of an intramolecular disulfide bond between cysteines Cys-38 and Cys-83 specifically enhances the nitrite reductase activity. Expressed in brain and retina by non-neuronal cells (at protein level). This is the major globin expressed in vascular smooth muscle and is not present in the endothelium (at protein level).

It localises to the cytoplasm. The protein localises to the nucleus. The catalysed reaction is Fe(II)-heme b-[protein] + nitric oxide + O2 = Fe(III)-heme b-[protein] + nitrate. It carries out the reaction 2 superoxide + 2 H(+) = H2O2 + O2. The enzyme catalyses Fe(III)-heme b-[protein] + nitric oxide + H2O = Fe(II)-heme b-[protein] + nitrite + 2 H(+). It catalyses the reaction H2O2 + AH2 = A + 2 H2O. Its activity is regulated as follows. The nitric oxide dioxygenase activity is activated by a reducing system composed of cytochrome b5, its upstream reductase CYB5R3 and NADH. Probable multifunctional globin with a hexacoordinated heme iron required for the catalysis of various reactions depending on redox condition of the cell as well as oxygen availability. Has a nitric oxide dioxygenase (NOD) activity and is most probably involved in cell-mediated and oxygen-dependent nitric oxide consumption. By scavenging this second messenger may regulate several biological processes including endothelium-mediated vasodilation and vascular tone. Under normoxic conditions functions as a nitric oxide dioxygenase (NOD) but under hypoxic conditions the globin may switch its function to that of a nitrite (NO2) reductase (NiR), generating nitric oxide. Could also have peroxidase and superoxide dismutase activities, detoxifying reactive oxygen species and protecting cells against oxidative stress. Also binds dioxygen with low affinity and could function as an oxygen sensor but has probably no function as a respiratory oxygen carrier. This chain is Cytoglobin, found in Mus musculus (Mouse).